Consider the following 307-residue polypeptide: Ornithine carbamoyltransferase (307 aa).

Residues 50-53 (STRT), Gln77, Arg101, and 128-131 (HPCQ) contribute to the carbamoyl phosphate site. L-ornithine is bound by residues Asn160, Asp224, and 228–229 (SM). Carbamoyl phosphate contacts are provided by residues 264-265 (CL) and Arg292.

This sequence belongs to the aspartate/ornithine carbamoyltransferase superfamily. OTCase family.

It localises to the cytoplasm. It catalyses the reaction carbamoyl phosphate + L-ornithine = L-citrulline + phosphate + H(+). The protein operates within amino-acid biosynthesis; L-arginine biosynthesis; L-arginine from L-ornithine and carbamoyl phosphate: step 1/3. Its function is as follows. Reversibly catalyzes the transfer of the carbamoyl group from carbamoyl phosphate (CP) to the N(epsilon) atom of ornithine (ORN) to produce L-citrulline. In Clavibacter sepedonicus (Clavibacter michiganensis subsp. sepedonicus), this protein is Ornithine carbamoyltransferase.